The primary structure comprises 485 residues: Phosphoglucosamine mutase (485 aa).

The active-site Phosphoserine intermediate is the Ser133. Mg(2+) is bound by residues Ser133, Asp274, Asp276, and Asp278. Position 133 is a phosphoserine (Ser133).

It belongs to the phosphohexose mutase family. Mg(2+) serves as cofactor. Activated by phosphorylation.

The catalysed reaction is alpha-D-glucosamine 1-phosphate = D-glucosamine 6-phosphate. Functionally, catalyzes the conversion of glucosamine-6-phosphate to glucosamine-1-phosphate. This chain is Phosphoglucosamine mutase, found in Crocosphaera subtropica (strain ATCC 51142 / BH68) (Cyanothece sp. (strain ATCC 51142)).